A 1473-amino-acid polypeptide reads, in one-letter code: Collagen alpha-1(XVII) chain (1473 aa).

Positions 1-19 (MDITQKNKRDGTEVTERII) are enriched in basic and acidic residues. Disordered regions lie at residues 1–155 (MDIT…PSTR) and 168–188 (GSRS…PIPK). Over 1-474 (MDITQKNKRD…CGSWCSWWKW (474 aa)) the chain is Cytoplasmic. Residues 1 to 572 (MDITQKNKRD…MTEQENGNLR (572 aa)) are nonhelical region (NC16). Polar residues-rich tracts occupy residues 57–96 (LTHG…SPGS), 111–120 (EGSSSGNSSP), and 170–184 (RSAS…SNTL). Positions 146–231 (RLQSASPSTR…WSSTLPAGSS (86 aa)) are necessary for interaction with DST and for the recruitment of DST to hemidesmosome. A helical; Signal-anchor for type II membrane protein membrane pass occupies residues 475–495 (LLGLLLTWLLLLGLLFGLIAL). The Extracellular segment spans residues 496–1473 (AEEVRKLKAR…RRRRSIAVKP (978 aa)). 3 disordered regions span residues 567-1017 (ENGN…LSSS), 1173-1234 (FRGI…ISGA), and 1261-1308 (SFIV…SSMG). The interval 573 to 1459 (GSPGPKGDMG…KGEKGDKGDQ (887 aa)) is triple-helical region. Low complexity-rich tracts occupy residues 619 to 638 (EPGM…MGPR), 667 to 678 (PGSVGPKGSIGP), 729 to 742 (EPGA…AGPD), and 769 to 790 (PGKP…PGRP). Pro residues predominate over residues 814–835 (PGPPGPPGAMGPPGPPGAPGPV). Low complexity-rich tracts occupy residues 837–847 (PAGLPGQQGPR) and 854–866 (GESF…SFSE). Pro residues-rich tracts occupy residues 878 to 899 (PPGP…PGPP) and 913 to 922 (PPGPPGPPGP). Over residues 940 to 957 (FPGLSGSGSSSLGLNLQG) the composition is skewed to low complexity. 2 stretches are compositionally biased toward pro residues: residues 1001-1011 (PPGPPGPPGPP) and 1179-1188 (PPGPPGPPGL). Polar residues predominate over residues 1198-1210 (TEDLSSYLQTAGL). Composition is skewed to pro residues over residues 1214–1228 (PGPP…PRGP) and 1266–1275 (PPGPPGPQGP). A compositionally biased stretch (low complexity) spans 1283 to 1307 (STDSSYSRSGSSSSFSRDTSYSSSM). The N-linked (GlcNAc...) asparagine glycan is linked to asparagine 1404. The tract at residues 1417–1473 (GAIPGPPGQKGEMGIPGPKGERGPAGPPGPRGHKGEKGDKGDQFYIGRRRRSIAVKP) is disordered. Over residues 1449–1458 (HKGEKGDKGD) the composition is skewed to basic and acidic residues. Residues 1460–1473 (FYIGRRRRSIAVKP) form a nonhelical region (NC1) region. Positions 1463–1473 (GRRRRSIAVKP) are enriched in basic residues.

Homotrimers of alpha 1(XVII)chains. Interacts (via cytoplasmic region) with ITGB4 (via cytoplasmic region). Interacts (via cytoplasmic region) with DST (via N-terminus). Interacts (via N-terminus) with PLEC. Interacts (via cytoplasmic region) with DSP. In terms of processing, the intracellular/endo domain is disulfide-linked. Post-translationally, prolines at the third position of the tripeptide repeating unit (G-X-Y) are hydroxylated in some or all of the chains. The ectodomain is shedded from the surface of keratinocytes resulting in a 120-kDa soluble form, also named as 120 kDa linear IgA disease antigen homolog. The shedding is mediated by membrane-bound metalloproteases.

Its subcellular location is the cell junction. It localises to the hemidesmosome. The protein localises to the membrane. It is found in the secreted. The protein resides in the extracellular space. Its subcellular location is the extracellular matrix. It localises to the basement membrane. Functionally, may play a role in the integrity of hemidesmosome and the attachment of basal keratinocytes to the underlying basement membrane. The 120 kDa linear IgA disease antigen homolog is an anchoring filament component involved in dermal-epidermal cohesion. This is Collagen alpha-1(XVII) chain (COL17A1) from Bos taurus (Bovine).